The primary structure comprises 48 residues: Protein PsbN (48 aa).

Residues 12 to 34 (LLIAMVTITFGLTGYGLYTAFGP) form a helical membrane-spanning segment.

It belongs to the PsbN family.

The protein localises to the cellular thylakoid membrane. Functionally, may play a role in photosystem I and II biogenesis. This is Protein PsbN from Prochlorococcus marinus (strain MIT 9313).